A 220-amino-acid chain; its full sequence is Adenylate kinase (220 aa).

G13–T18 contacts ATP. An NMP region spans residues S33 to V62. AMP-binding positions include T34, R39, A60–V62, G88–R91, and Q95. Residues G129–D170 are LID. R130 is a binding site for ATP. Zn(2+) is bound by residues C133 and C136. I139–F140 is a binding site for ATP. The Zn(2+) site is built by D156 and C160. Positions 167 and 178 each coordinate AMP. R206 serves as a coordination point for ATP.

The protein belongs to the adenylate kinase family. As to quaternary structure, monomer.

The protein localises to the cytoplasm. The catalysed reaction is AMP + ATP = 2 ADP. It functions in the pathway purine metabolism; AMP biosynthesis via salvage pathway; AMP from ADP: step 1/1. Its function is as follows. Catalyzes the reversible transfer of the terminal phosphate group between ATP and AMP. Plays an important role in cellular energy homeostasis and in adenine nucleotide metabolism. The polypeptide is Adenylate kinase (Gloeobacter violaceus (strain ATCC 29082 / PCC 7421)).